A 300-amino-acid polypeptide reads, in one-letter code: MKIGHQFHTVALVGRSNTPGIAEPLASLAACIAKRGFEVVFEADTAQAIGSAGYPALTPAEIGARAGVAVVLGGDGTMLGMGRQLAPYKTPLIGINHGRLGFITDIPASDMREVVPMMLAGSYEREERTLLEARIVRNGEPIYHALAFNDVVVNRSGFSGMAELRVSVDGRFMYNQRSDGLIVATPTGSTAYALSSQGPILHPQLQGIVLVPIAPHALSNRPIVLPDDSKIAIQIIGGRDVNVNFDMQSFTALELNDTIEVRRSKHTVPFLHPVGYSYYATLRKKLHWNEHPSSEEDDDA.

D75 (proton acceptor) is an active-site residue. NAD(+)-binding positions include 75–76 (DG), 149–150 (ND), R177, D179, 190–195 (TAYALS), A214, and Q248.

The protein belongs to the NAD kinase family. A divalent metal cation serves as cofactor.

The protein resides in the cytoplasm. The catalysed reaction is NAD(+) + ATP = ADP + NADP(+) + H(+). Involved in the regulation of the intracellular balance of NAD and NADP, and is a key enzyme in the biosynthesis of NADP. Catalyzes specifically the phosphorylation on 2'-hydroxyl of the adenosine moiety of NAD to yield NADP. This is NAD kinase from Burkholderia mallei (strain SAVP1).